Here is a 273-residue protein sequence, read N- to C-terminus: Ribosomal RNA small subunit methyltransferase A (273 aa).

S-adenosyl-L-methionine-binding residues include N18, L20, G45, E66, D91, and N113.

It belongs to the class I-like SAM-binding methyltransferase superfamily. rRNA adenine N(6)-methyltransferase family. RsmA subfamily.

The protein localises to the cytoplasm. It catalyses the reaction adenosine(1518)/adenosine(1519) in 16S rRNA + 4 S-adenosyl-L-methionine = N(6)-dimethyladenosine(1518)/N(6)-dimethyladenosine(1519) in 16S rRNA + 4 S-adenosyl-L-homocysteine + 4 H(+). Specifically dimethylates two adjacent adenosines (A1518 and A1519) in the loop of a conserved hairpin near the 3'-end of 16S rRNA in the 30S particle. May play a critical role in biogenesis of 30S subunits. The sequence is that of Ribosomal RNA small subunit methyltransferase A from Escherichia coli (strain SE11).